Consider the following 342-residue polypeptide: MSVDINILAIESSCDESGVAIYNPARGVLANQVFSQIDLHRVFGGVVPELAARDHLKRFPVLMNQALTQAKLNLSAIDVIAYTSGPGLLGALMTGATFAHSLAFAIRRPVLKIHHMEGHLLSPFLAPLKPEFPFIALLVSGGHTQLLSVKAVGDYEILGQTLDDAVGEAFDKMAKIMGLPYPGGPELAALAKNGDEQRFVMPRPMINRPDLDFSFSGLKTHVRLLIAEQNNDPQTRADIAASFQKTVVETLLIKCRRAWKKTGYRDLVVSGGVSANQALRAALQKNADEHKKRVFFPPLTLCGDNALMIAHAASFRLQEARIDDDVIDVTARWELSRLSTPL.

2 residues coordinate Fe cation: histidine 115 and histidine 119. Residues 138–142, aspartate 171, glycine 184, and asparagine 276 contribute to the substrate site; that span reads LVSGG. Aspartate 304 contacts Fe cation.

This sequence belongs to the KAE1 / TsaD family. It depends on Fe(2+) as a cofactor.

It is found in the cytoplasm. The catalysed reaction is L-threonylcarbamoyladenylate + adenosine(37) in tRNA = N(6)-L-threonylcarbamoyladenosine(37) in tRNA + AMP + H(+). In terms of biological role, required for the formation of a threonylcarbamoyl group on adenosine at position 37 (t(6)A37) in tRNAs that read codons beginning with adenine. Is involved in the transfer of the threonylcarbamoyl moiety of threonylcarbamoyl-AMP (TC-AMP) to the N6 group of A37, together with TsaE and TsaB. TsaD likely plays a direct catalytic role in this reaction. The sequence is that of tRNA N6-adenosine threonylcarbamoyltransferase from Dichelobacter nodosus (strain VCS1703A).